A 213-amino-acid polypeptide reads, in one-letter code: MRLFLLLITFIALFGAINAFSGVDISQGSSVGDFQCMLNQGFEFAIIRGYMETGQVDPEVVNSIACAREAGVEYVDTYLFPCFNCGNPQDQGPALVNYLSGYNANYGMVWLDIESSDWSGDQSANVAFFEGLISGLQSVGAHIGVYTSASQWIPIMGGYTGGSEFPLWYANWDGVQSFDDFSAFGGWSTPAIKQYNDGGSNCGVGYDFNWYPN.

An N-terminal signal peptide occupies residues Met-1–Ala-19. One can recognise a Ch-type lysozyme domain in the interval Ser-21–Asn-213. Active-site residues include Asp-24, Asp-112, and Glu-114.

The protein belongs to the glycosyl hydrolase 25 family.

The protein localises to the secreted. It carries out the reaction Hydrolysis of (1-&gt;4)-beta-linkages between N-acetylmuramic acid and N-acetyl-D-glucosamine residues in a peptidoglycan and between N-acetyl-D-glucosamine residues in chitodextrins.. This chain is Probable GH family 25 lysozyme 4, found in Dictyostelium discoideum (Social amoeba).